A 415-amino-acid polypeptide reads, in one-letter code: Fructose-like permease IIC component (415 aa).

The Cytoplasmic segment spans residues 1 to 46 (MAIKKRSATVVHGASGAAAAVKNPQASKSSFWGELPQHVMSGISRM). The PTS EIIC type-2 domain maps to 35–415 (LPQHVMSGIS…RKGKLLIESL (381 aa)). A helical membrane pass occupies residues 47-67 (VPTLIMGGVILAFSQLIAYSW). Residues 68 to 101 (LKIPADIGIMDALNSGKFSGFDLSLLKFAWLSQS) lie on the Periplasmic side of the membrane. The chain crosses the membrane as a helical span at residues 102–122 (FGGVLFGFAIPMFAAFVANSI). Topologically, residues 123 to 126 (GGKL) are cytoplasmic. The chain crosses the membrane as a helical span at residues 127 to 147 (AFPAGFIGGLMSTQPTQLLNF). Topologically, residues 148–157 (DPSTMQWATS) are periplasmic. Residues 158 to 178 (SPVPSTFIGALIISIVAGYLV) traverse the membrane as a helical segment. The Cytoplasmic portion of the chain corresponds to 179–197 (KWMNQKIQLPDFLLAFKTT). Residues 198–218 (FLLPILSAIFVMLAMYYVITP) traverse the membrane as a helical segment. Topologically, residues 219-237 (FGGWINGGIRTVLTAAGEK) are periplasmic. Residues 238-258 (GALMYAMGIAAATAIDLGGPI) traverse the membrane as a helical segment. Topologically, residues 259–276 (NKAAGFVAFSFTTDHVLP) are cytoplasmic. A helical transmembrane segment spans residues 277–297 (VTARSIAIVIPPIGLGLATII). Over 298-318 (DRRLTGKRLFNAQLYPQGKTA) the chain is Periplasmic. A helical membrane pass occupies residues 319-339 (MFLAFMGISEGAIPFALESPI). Residues 340–341 (TA) are Cytoplasmic-facing. The helical transmembrane segment at 342–362 (IPSYMVGAIVGSTAAVWLGAV) threads the bilayer. Over 363 to 378 (QWFPESAIWAWPLVTN) the chain is Periplasmic. Residues 379-399 (LGVYMAGIALGAIITALMVVF) form a helical membrane-spanning segment. Residues 400 to 415 (LRLMMFRKGKLLIESL) are Cytoplasmic-facing.

Its subcellular location is the cell inner membrane. Functionally, the phosphoenolpyruvate-dependent sugar phosphotransferase system (PTS), a major carbohydrate active -transport system, catalyzes the phosphorylation of incoming sugar substrates concomitant with their translocation across the cell membrane. The protein is Fructose-like permease IIC component (fryC) of Escherichia coli O6:H1 (strain CFT073 / ATCC 700928 / UPEC).